The primary structure comprises 1286 residues: Ankyrin-repeat and fibronectin type III domain-containing 1 (1286 aa).

ANK repeat units follow at residues 274-303 (QGNE…PEEL) and 311-340 (EGLT…RESP). The Fibronectin type-III domain occupies 411-507 (VPANACLMVS…TTTPVCASPS (97 aa)). Positions 748-755 (GLYLGYLK) are highly conserved peptide sequence. A compositionally biased stretch (polar residues) spans 999–1011 (SSHIDCLPSTSPS). 4 disordered regions span residues 999–1032 (SSHI…EEGC), 1086–1106 (KASM…DTDH), 1187–1207 (AEDP…RGLP), and 1242–1286 (AGQD…SSML). The span at 1260–1277 (SSLPSSTSSEMSPDPTSP) shows a compositional bias: low complexity.

Expressed in both the suprachiasmatic nucleus and dorsal medial hypothalamus.

Its function is as follows. May play a role in neuronal function. In Mus musculus (Mouse), this protein is Ankyrin-repeat and fibronectin type III domain-containing 1.